A 371-amino-acid chain; its full sequence is Queuine tRNA-ribosyltransferase (371 aa).

Asp-90 functions as the Proton acceptor in the catalytic mechanism. Substrate-binding positions include 90–94 (DSGGF), Asp-144, Gln-188, and Gly-215. The RNA binding stretch occupies residues 246-252 (GVGTPED). The active-site Nucleophile is the Asp-265. Residues 270–274 (TRNAR) form an RNA binding; important for wobble base 34 recognition region. Residues Cys-303, Cys-305, Cys-308, and His-334 each coordinate Zn(2+).

It belongs to the queuine tRNA-ribosyltransferase family. As to quaternary structure, homodimer. Within each dimer, one monomer is responsible for RNA recognition and catalysis, while the other monomer binds to the replacement base PreQ1. It depends on Zn(2+) as a cofactor.

The enzyme catalyses 7-aminomethyl-7-carbaguanine + guanosine(34) in tRNA = 7-aminomethyl-7-carbaguanosine(34) in tRNA + guanine. It functions in the pathway tRNA modification; tRNA-queuosine biosynthesis. In terms of biological role, catalyzes the base-exchange of a guanine (G) residue with the queuine precursor 7-aminomethyl-7-deazaguanine (PreQ1) at position 34 (anticodon wobble position) in tRNAs with GU(N) anticodons (tRNA-Asp, -Asn, -His and -Tyr). Catalysis occurs through a double-displacement mechanism. The nucleophile active site attacks the C1' of nucleotide 34 to detach the guanine base from the RNA, forming a covalent enzyme-RNA intermediate. The proton acceptor active site deprotonates the incoming PreQ1, allowing a nucleophilic attack on the C1' of the ribose to form the product. After dissociation, two additional enzymatic reactions on the tRNA convert PreQ1 to queuine (Q), resulting in the hypermodified nucleoside queuosine (7-(((4,5-cis-dihydroxy-2-cyclopenten-1-yl)amino)methyl)-7-deazaguanosine). The polypeptide is Queuine tRNA-ribosyltransferase (Neisseria meningitidis serogroup B (strain ATCC BAA-335 / MC58)).